Here is a 327-residue protein sequence, read N- to C-terminus: Probable protein phosphatase 2C 59 (327 aa).

An N-terminal signal peptide occupies residues 1–24; sequence MREVLLLGSLVVLALLSLFPCCSC. The 247-residue stretch at 64–310 folds into the PPM-type phosphatase domain; it reads SYGYASSPGK…DNITCLVVRF (247 aa). Mn(2+) contacts are provided by Asp100, Gly101, Asp262, and Asp301.

This sequence belongs to the PP2C family. It depends on Mg(2+) as a cofactor. Mn(2+) serves as cofactor.

The enzyme catalyses O-phospho-L-seryl-[protein] + H2O = L-seryl-[protein] + phosphate. It catalyses the reaction O-phospho-L-threonyl-[protein] + H2O = L-threonyl-[protein] + phosphate. The sequence is that of Probable protein phosphatase 2C 59 from Oryza sativa subsp. japonica (Rice).